The primary structure comprises 119 residues: NADH dehydrogenase [ubiquinone] 1 subunit C2 (119 aa).

Residues 56 to 75 (GLHRQLLYITAFFFAGYYLV) traverse the membrane as a helical segment.

It belongs to the complex I NDUFC2 subunit family. Complex I is composed of 45 different subunits. Interacts with TMEM242.

The protein localises to the mitochondrion inner membrane. Accessory subunit of the mitochondrial membrane respiratory chain NADH dehydrogenase (Complex I), that is believed not to be involved in catalysis but required for the complex assembly. Complex I functions in the transfer of electrons from NADH to the respiratory chain. The immediate electron acceptor for the enzyme is believed to be ubiquinone. The protein is NADH dehydrogenase [ubiquinone] 1 subunit C2 of Pan troglodytes (Chimpanzee).